We begin with the raw amino-acid sequence, 252 residues long: Imidazole glycerol phosphate synthase subunit HisF (252 aa).

Residues aspartate 11 and aspartate 130 contribute to the active site.

Belongs to the HisA/HisF family. In terms of assembly, heterodimer of HisH and HisF.

It localises to the cytoplasm. It catalyses the reaction 5-[(5-phospho-1-deoxy-D-ribulos-1-ylimino)methylamino]-1-(5-phospho-beta-D-ribosyl)imidazole-4-carboxamide + L-glutamine = D-erythro-1-(imidazol-4-yl)glycerol 3-phosphate + 5-amino-1-(5-phospho-beta-D-ribosyl)imidazole-4-carboxamide + L-glutamate + H(+). It functions in the pathway amino-acid biosynthesis; L-histidine biosynthesis; L-histidine from 5-phospho-alpha-D-ribose 1-diphosphate: step 5/9. Its function is as follows. IGPS catalyzes the conversion of PRFAR and glutamine to IGP, AICAR and glutamate. The HisF subunit catalyzes the cyclization activity that produces IGP and AICAR from PRFAR using the ammonia provided by the HisH subunit. The sequence is that of Imidazole glycerol phosphate synthase subunit HisF from Bacillus cereus (strain AH187).